A 543-amino-acid polypeptide reads, in one-letter code: Efflux pump mokI (543 aa).

Helical transmembrane passes span 30-50 (LVVT…SIIV), 90-110 (LLTL…GSAL), 125-145 (AVAG…LASA), 153-173 (LLIG…PLLG), 185-205 (CFYI…AIHI), 233-253 (LLGF…LEWG), 261-281 (SSVI…FGFW), 307-327 (LFLG…PIYF), 340-360 (VYML…GAII), 364-384 (GYYI…AGLV), 394-416 (AAWV…TPII), 428-448 (ALGI…FLTL), and 509-529 (VGAS…GLIW).

Belongs to the major facilitator superfamily. TCR/Tet family.

The protein localises to the membrane. In terms of biological role, efflux pump; part of the gene cluster that mediates the biosynthesis of monakolin K, also known as lovastatin, and which acts as a potent competitive inhibitor of HMG-CoA reductase. The polypeptide is Efflux pump mokI (Monascus pilosus (Red mold)).